The sequence spans 280 residues: Acetyl-coenzyme A carboxylase carboxyl transferase subunit beta (280 aa).

The 256-residue stretch at 25-280 (VMRECPICHA…RLHTKENAYG (256 aa)) folds into the CoA carboxyltransferase N-terminal domain. Zn(2+) contacts are provided by cysteine 29, cysteine 32, cysteine 47, and cysteine 50. The segment at 29–50 (CPICHAKFLSMRLGRDHTCPKC) adopts a C4-type zinc-finger fold.

Belongs to the AccD/PCCB family. In terms of assembly, acetyl-CoA carboxylase is a heterohexamer composed of biotin carboxyl carrier protein (AccB), biotin carboxylase (AccC) and two subunits each of ACCase subunit alpha (AccA) and ACCase subunit beta (AccD). Zn(2+) serves as cofactor.

It is found in the cytoplasm. The enzyme catalyses N(6)-carboxybiotinyl-L-lysyl-[protein] + acetyl-CoA = N(6)-biotinyl-L-lysyl-[protein] + malonyl-CoA. It functions in the pathway lipid metabolism; malonyl-CoA biosynthesis; malonyl-CoA from acetyl-CoA: step 1/1. Its function is as follows. Component of the acetyl coenzyme A carboxylase (ACC) complex. Biotin carboxylase (BC) catalyzes the carboxylation of biotin on its carrier protein (BCCP) and then the CO(2) group is transferred by the transcarboxylase to acetyl-CoA to form malonyl-CoA. The sequence is that of Acetyl-coenzyme A carboxylase carboxyl transferase subunit beta from Lactobacillus helveticus (strain DPC 4571).